Here is a 545-residue protein sequence, read N- to C-terminus: CTP synthase (545 aa).

The segment at 1-266 (MATNYIFVTG…DDFVCERFRL (266 aa)) is amidoligase domain. Ser14 contributes to the CTP binding site. Ser14 contributes to the UTP binding site. Residues 15-20 (SLGKGI) and Asp72 contribute to the ATP site. Residues Asp72 and Glu140 each coordinate Mg(2+). CTP-binding positions include 147-149 (DIE), 187-192 (KTKPTQ), and Lys223. UTP-binding positions include 187 to 192 (KTKPTQ) and Lys223. 239 to 241 (KDV) is an ATP binding site. The region spanning 291–542 (TIGMVGKYTE…VKAAYENHKK (252 aa)) is the Glutamine amidotransferase type-1 domain. Residue Gly352 participates in L-glutamine binding. Cys379 serves as the catalytic Nucleophile; for glutamine hydrolysis. L-glutamine-binding positions include 380-383 (LGMQ), Glu403, and Arg470. Residues His515 and Glu517 contribute to the active site.

The protein belongs to the CTP synthase family. Homotetramer.

It carries out the reaction UTP + L-glutamine + ATP + H2O = CTP + L-glutamate + ADP + phosphate + 2 H(+). The catalysed reaction is L-glutamine + H2O = L-glutamate + NH4(+). It catalyses the reaction UTP + NH4(+) + ATP = CTP + ADP + phosphate + 2 H(+). It participates in pyrimidine metabolism; CTP biosynthesis via de novo pathway; CTP from UDP: step 2/2. With respect to regulation, allosterically activated by GTP, when glutamine is the substrate; GTP has no effect on the reaction when ammonia is the substrate. The allosteric effector GTP functions by stabilizing the protein conformation that binds the tetrahedral intermediate(s) formed during glutamine hydrolysis. Inhibited by the product CTP, via allosteric rather than competitive inhibition. Functionally, catalyzes the ATP-dependent amination of UTP to CTP with either L-glutamine or ammonia as the source of nitrogen. Regulates intracellular CTP levels through interactions with the four ribonucleotide triphosphates. This Haemophilus influenzae (strain PittGG) protein is CTP synthase.